We begin with the raw amino-acid sequence, 232 residues long: LexA repressor (232 aa).

Positions 1–25 (MSDDSSDSTSGAGSGRGRDSGLTER) are disordered. Residues 16–25 (RGRDSGLTER) are compositionally biased toward basic and acidic residues. A DNA-binding region (H-T-H motif) is located at residues 46 to 66 (IREIGDAVGLTSTSSVAHQLR). Residues serine 156 and lysine 193 each act as for autocatalytic cleavage activity in the active site.

It belongs to the peptidase S24 family. Homodimer.

The enzyme catalyses Hydrolysis of Ala-|-Gly bond in repressor LexA.. Represses a number of genes involved in the response to DNA damage (SOS response), including recA and lexA. In the presence of single-stranded DNA, RecA interacts with LexA causing an autocatalytic cleavage which disrupts the DNA-binding part of LexA, leading to derepression of the SOS regulon and eventually DNA repair. This is LexA repressor from Mycolicibacterium vanbaalenii (strain DSM 7251 / JCM 13017 / BCRC 16820 / KCTC 9966 / NRRL B-24157 / PYR-1) (Mycobacterium vanbaalenii).